The following is a 247-amino-acid chain: Fibroblast growth factor 14 (247 aa).

Disordered stretches follow at residues 1–38 and 216–247; these read MAAA…KNRG and ETVP…CKTT. Basic and acidic residues predominate over residues 15–25; the sequence is QAREQHWDRPS.

This sequence belongs to the heparin-binding growth factors family. As to quaternary structure, interacts with SCN8A.

It localises to the nucleus. In terms of biological role, probably involved in nervous system development and function. The sequence is that of Fibroblast growth factor 14 (Fgf14) from Rattus norvegicus (Rat).